We begin with the raw amino-acid sequence, 523 residues long: 2-isopropylmalate synthase (523 aa).

In terms of domain architecture, Pyruvate carboxyltransferase spans 5 to 267; the sequence is VIIFDTTLRD…HTNINHHEIW (263 aa). Mn(2+) is bound by residues aspartate 14, histidine 202, histidine 204, and asparagine 238. Residues 392–523 are regulatory domain; that stretch reads RLDYFSVQSG…QNKENNKETV (132 aa).

The protein belongs to the alpha-IPM synthase/homocitrate synthase family. LeuA type 1 subfamily. In terms of assembly, homodimer. Mn(2+) is required as a cofactor.

Its subcellular location is the cytoplasm. The catalysed reaction is 3-methyl-2-oxobutanoate + acetyl-CoA + H2O = (2S)-2-isopropylmalate + CoA + H(+). The protein operates within amino-acid biosynthesis; L-leucine biosynthesis; L-leucine from 3-methyl-2-oxobutanoate: step 1/4. Functionally, catalyzes the condensation of the acetyl group of acetyl-CoA with 3-methyl-2-oxobutanoate (2-ketoisovalerate) to form 3-carboxy-3-hydroxy-4-methylpentanoate (2-isopropylmalate). This Salmonella paratyphi A (strain ATCC 9150 / SARB42) protein is 2-isopropylmalate synthase.